We begin with the raw amino-acid sequence, 89 residues long: Small ribosomal subunit protein uS14 (89 aa).

This sequence belongs to the universal ribosomal protein uS14 family. As to quaternary structure, part of the 30S ribosomal subunit. Contacts proteins S3 and S10.

In terms of biological role, binds 16S rRNA, required for the assembly of 30S particles and may also be responsible for determining the conformation of the 16S rRNA at the A site. This chain is Small ribosomal subunit protein uS14, found in Chlorobaculum parvum (strain DSM 263 / NCIMB 8327) (Chlorobium vibrioforme subsp. thiosulfatophilum).